The following is a 468-amino-acid chain: Inositol polyphosphate 5-phosphatase K (468 aa).

The catalytic stretch occupies residues 34-337 (VHVVTWNVAS…SDHKPVTGTF (304 aa)). The segment at 318-448 (NYVSHMAYSI…HSVVGISQPF (131 aa)) is required for interaction with GPR78 and PAK1. Residues 340–468 (ELNPLMSVPL…DTLYEPEPQI (129 aa)) form a required for ruffle localization region.

It belongs to the inositol 1,4,5-trisphosphate 5-phosphatase type II family. As to quaternary structure, interacts with GPR78; necessary for INPP5K localization at the endoplasmic reticulum. Interacts with PAK1; competes with GPR78. Expressed in the skeletal muscle and the eye.

It localises to the endoplasmic reticulum. Its subcellular location is the cytoplasm. The enzyme catalyses 1D-myo-inositol 1,4,5-trisphosphate + H2O = 1D-myo-inositol 1,4-bisphosphate + phosphate. It carries out the reaction 1,2-dioctanoyl-sn-glycero-3-phospho-(1D-myo-inositol-3,4,5-trisphosphate) + H2O = 1,2-dioctanoyl-sn-glycero-3-phospho-(1D-myo-inositol-3,4-bisphosphate) + phosphate. The catalysed reaction is 1D-myo-inositol 1,3,4,5-tetrakisphosphate + H2O = 1D-myo-inositol 1,3,4-trisphosphate + phosphate. It catalyses the reaction a 1,2-diacyl-sn-glycero-3-phospho-(1D-myo-inositol-4,5-bisphosphate) + H2O = a 1,2-diacyl-sn-glycero-3-phospho-(1D-myo-inositol 4-phosphate) + phosphate. The enzyme catalyses a 1,2-diacyl-sn-glycero-3-phospho-(1D-myo-inositol-3,4,5-trisphosphate) + H2O = a 1,2-diacyl-sn-glycero-3-phospho-(1D-myo-inositol-3,4-bisphosphate) + phosphate. In terms of biological role, inositol 5-phosphatase which acts on inositol 1,4,5-trisphosphate, inositol 1,3,4,5-tetrakisphosphate, phosphatidylinositol 4,5-bisphosphate and phosphatidylinositol 3,4,5-trisphosphate. Has 6-fold higher affinity for phosphatidylinositol 4,5-bisphosphate than for inositol 1,4,5-trisphosphate. Negatively regulates assembly of the actin cytoskeleton. Controls insulin-dependent glucose uptake among inositol 3,4,5-trisphosphate phosphatases; therefore, is the specific regulator for insulin signaling in skeletal muscle. The protein is Inositol polyphosphate 5-phosphatase K of Mus musculus (Mouse).